The sequence spans 185 residues: Casparian strip membrane protein 5 (185 aa).

At 1 to 25 (MKAEAVESGEASTIIAAPKRGINRG) the chain is on the cytoplasmic side. A helical transmembrane segment spans residues 26 to 46 (ISIADLILRGVAAIGTFASAL). Residues 47–75 (TMGTTSETLTIFTQPIMIRAKYNDLPSLT) lie on the Extracellular side of the membrane. A helical membrane pass occupies residues 76–96 (FFVIANSIVCGYLVLSIPLSI). Topologically, residues 97–108 (SHFIRREARITR) are cytoplasmic. The chain crosses the membrane as a helical span at residues 109–129 (IILVIFDTAMVELLTAGASAA). At 130–160 (TVVVYLAHKRNANWLAICQQFNNFCERISGS) the chain is on the extracellular side. A helical transmembrane segment spans residues 161–181 (LIGSFASIIMIMLIIITSAVA). The Cytoplasmic portion of the chain corresponds to 182-185 (LSRH).

Belongs to the Casparian strip membrane proteins (CASP) family. In terms of assembly, homodimer and heterodimers.

The protein localises to the cell membrane. Functionally, regulates membrane-cell wall junctions and localized cell wall deposition. Required for establishment of the Casparian strip membrane domain (CSD) and the subsequent formation of Casparian strips, a cell wall modification of the root endodermis that determines an apoplastic barrier between the intraorganismal apoplasm and the extraorganismal apoplasm and prevents lateral diffusion. The polypeptide is Casparian strip membrane protein 5 (Populus trichocarpa (Western balsam poplar)).